The primary structure comprises 605 residues: MANDKGSNWDSGLGCSYLLTEAECESDKENEEPGAGVELSVESDRYDSQDEDFVDNASVFQGNHLEVFQALEKKAGEEQILNLKRKVLGSSQNSSGSEASETPVKRRKSGAKRRLFAENEANRVLTPLQVQGEGEGRQELNEEQAISHLHLQLVKSKNATVFKLGLFKSLFLCSFHDITRLFKNDKTTNQQWVLAVFGLAEVFFEASFELLKKQCSFLQMQKRSHEGGTCAVYLICFNTAKSRETVRNLMANTLNVREECLMLQPAKIRGLSAALFWFKSSLSPATLKHGALPEWIRAQTTLNESLQTEKFDFGTMVQWAYDHKYAEESKIAYEYALAAGSDSNARAFLATNSQAKHVKDCATMVRHYLRAETQALSMPAYIKARCKLATGEGSWKSILTFFNYQNIELITFINALKLWLKGIPKKNCLAFIGPPNTGKSMLCNSLIHFLGGSVLSFANHKSHFWLASLADTRAALVDDATHACWRYFDTYLRNALDGYPVSIDRKHKAAVQIKAPPLLVTSNIDVQAEDRYLYLHSRVQTFRFEQPCTDESGEQPFNITDADWKSFFVRLWGRLDLIDEEEDSEEDGDSMRTFTCSARNTNAVD.

The short motif at 84 to 86 (KRK) is the Nuclear localization signal element. 2 positions are modified to phosphoserine; by host: serine 90 and serine 94. Over residues 90–101 (SSQNSSGSEASE) the composition is skewed to low complexity. The segment at 90-112 (SSQNSSGSEASETPVKRRKSGAK) is disordered. Phosphothreonine; by host CDK1 is present on threonine 102. The short motif at 105–108 (KRRK) is the Nuclear localization signal element. Residue serine 109 is modified to Phosphoserine; by host. The DNA-binding region stretch occupies residues 142–308 (EEQAISHLHL…QTTLNESLQT (167 aa)). The region spanning 407–557 (IELITFINAL…CTDESGEQPF (151 aa)) is the SF3 helicase domain. 433–440 (GPPNTGKS) is an ATP binding site. Residue lysine 514 forms a Glycyl lysine isopeptide (Lys-Gly) (interchain with G-Cter in SUMO) linkage. The disordered stretch occupies residues 582–605 (EDSEEDGDSMRTFTCSARNTNAVD). The segment covering 592–605 (RTFTCSARNTNAVD) has biased composition (polar residues).

Belongs to the papillomaviridae E1 protein family. In terms of assembly, can form hexamers. Interacts with E2 protein; this interaction increases E1 DNA binding specificity. Interacts with host DNA polymerase subunit POLA2. Interacts with host single stranded DNA-binding protein RPA1. Interacts with host TOP1; this interaction stimulates the enzymatic activity of TOP1. In terms of processing, phosphorylated. Probably phosphorylated by host PKA and PKC at Ser-109. Phosphorylated by host CDK1 at Thr-102. Phosphorylated. Post-translationally, sumoylated.

The protein resides in the host nucleus. The enzyme catalyses Couples ATP hydrolysis with the unwinding of duplex DNA by translocating in the 3'-5' direction.. It catalyses the reaction ATP + H2O = ADP + phosphate + H(+). ATP-dependent DNA 3'-5' helicase required for initiation of viral DNA replication. It forms a complex with the viral E2 protein. The E1-E2 complex binds to the replication origin which contains binding sites for both proteins. During the initial step, a dimer of E1 interacts with a dimer of protein E2 leading to a complex that binds the viral origin of replication with high specificity. Then, a second dimer of E1 displaces the E2 dimer in an ATP-dependent manner to form the E1 tetramer. Following this, two E1 monomers are added to each half of the site, which results in the formation of two E1 trimers on the viral ori. Subsequently, two hexamers will be created. The double hexamer acts as a bi-directional helicase machinery and unwinds the viral DNA and then recruits the host DNA polymerase to start replication. The sequence is that of Replication protein E1 from Bovine papillomavirus type 1.